We begin with the raw amino-acid sequence, 185 residues long: Putative manganese efflux pump MntP (185 aa).

Transmembrane regions (helical) follow at residues 3–23, 40–60, 64–84, 102–122, 124–144, and 165–185; these read IFTL…VSLA, LLFV…VSVI, FDAY…LRMI, TFSR…AVGI, LSLA…FVLI, and EIFG…DAMM.

It belongs to the MntP (TC 9.B.29) family.

The protein resides in the cell inner membrane. In terms of biological role, probably functions as a manganese efflux pump. This is Putative manganese efflux pump MntP from Elusimicrobium minutum (strain Pei191).